A 61-amino-acid polypeptide reads, in one-letter code: Defensin-like peptide TXKs2 (61 aa).

The N-terminal stretch at 1 to 19 (MTYAILIIVSLLLISDRIS) is a signal peptide. Residues 20-22 (NVV) constitute a propeptide that is removed on maturation. Cystine bridges form between cysteine 26–cysteine 47, cysteine 33–cysteine 56, and cysteine 37–cysteine 58.

It belongs to the invertebrate defensin family. In terms of tissue distribution, expressed by the venom gland.

The protein resides in the secreted. Antibacterial protein. The chain is Defensin-like peptide TXKs2 from Olivierus martensii (Manchurian scorpion).